The primary structure comprises 110 residues: U-scoloptoxin(16)-Er7a (110 aa).

An N-terminal signal peptide occupies residues methionine 1–glycine 26.

This sequence belongs to the scoloptoxin-16 family. Contains 4 disulfide bonds. In terms of tissue distribution, expressed by the venom gland.

It is found in the secreted. The chain is U-scoloptoxin(16)-Er7a from Ethmostigmus rubripes (Giant centipede).